A 192-amino-acid polypeptide reads, in one-letter code: Type 1 phosphatases regulator YPI2 (192 aa).

Disordered regions lie at residues 1-53 (MLQR…GKHK) and 65-192 (EFGQ…PVQK). Positions 8-18 (QTSSSTQTETT) are enriched in low complexity. Residues 25–49 (RRPETRQKEDSKVKWTEDVIDNEHM) show a composition bias toward basic and acidic residues. Low complexity predominate over residues 69–79 (SSDESSDSSSD). Over residues 86–103 (YERNNDFDQNHRHSHNFD) the composition is skewed to basic and acidic residues. Over residues 134–148 (KGNTGMSKPSSSSPD) the composition is skewed to polar residues. Basic residues predominate over residues 157–169 (IHKRNKKVRKPKR).

It belongs to the YPI1 family.

The protein localises to the nucleus. Functionally, regulator of type 1 phosphatases which maintains protein phosphatase activity under strict control. The polypeptide is Type 1 phosphatases regulator YPI2 (YPI2) (Scheffersomyces stipitis (strain ATCC 58785 / CBS 6054 / NBRC 10063 / NRRL Y-11545) (Yeast)).